Reading from the N-terminus, the 343-residue chain is Probable magnesium transporter NIPA4 (343 aa).

Residues 1-18 (MAESSGSWRDSYKGMSSD) are Extracellular-facing. The helical transmembrane segment at 19–39 (NIKGLVLALSSSLFIGASFIV) threads the bilayer. Topologically, residues 40–66 (KKKGLKKAASTGTRAGVGGYSYLYEPL) are cytoplasmic. A helical membrane pass occupies residues 67 to 87 (WWIGMTTMLLGEIANFAAYAF). Residues 88-90 (APA) are Extracellular-facing. A helical transmembrane segment spans residues 91-111 (ILVTPLGAVSIIISAVLAHII). The Cytoplasmic segment spans residues 112 to 115 (LREK). Residues 116–136 (LHIFGILGCALCVVGSTTIVL) form a helical membrane-spanning segment. At 137-157 (HAPQEREIDSVIEVWNLATEP) the chain is on the extracellular side. Residues 158–178 (AFMFYASLVIGAAVFLIIRFV) traverse the membrane as a helical segment. At 179–189 (PQYGQTNVMVY) the chain is on the cytoplasmic side. A helical transmembrane segment spans residues 190 to 210 (IGICSLVGSLSVMSVKALGIA). The Extracellular segment spans residues 211-220 (LKLTFSGTNQ). A helical transmembrane segment spans residues 221 to 241 (LFYPQTWIFTLVVLTCVVTQL). Topologically, residues 242 to 254 (NYLNKALDTFNTA) are cytoplasmic. A helical transmembrane segment spans residues 255 to 275 (IVSPIYYVMFTSLTILASVIM). Residues 276 to 283 (FKDWDRQN) are Extracellular-facing. Residues 284–304 (GTQIVTEICGFVTILSGTFLL) traverse the membrane as a helical segment. Over 305–343 (HRTKDMVEGSSVILPLRISKHINEEEGIPLRRQESLRSP) the chain is Cytoplasmic.

Belongs to the NIPA (TC 2.A.7) family. Homodimer.

The protein resides in the cell membrane. It localises to the early endosome. Functionally, acts as a Mg(2+) transporter. Can also transport other divalent cations such as Fe(2+), Sr(2+), Ba(2+), Mn(2+) and Co(2+) but to a much less extent than Mg(2+). This is Probable magnesium transporter NIPA4 from Arabidopsis thaliana (Mouse-ear cress).